The chain runs to 525 residues: Golgi resident protein GCP60 (525 aa).

An N-acetylalanine modification is found at alanine 2. Positions 12–68 are disordered; that stretch reads VSLDGLTLSPDSEERPGAEGAPPQTPPSSAPGNGLGSGASGQQREPGEAAAEGAAEE. Serine 13 bears the Phosphoserine mark. A Phosphothreonine modification is found at threonine 18. Residues serine 20 and serine 40 each carry the phosphoserine modification. Residues 52 to 64 show a composition bias toward low complexity; it reads GQQREPGEAAAEG. An ACB domain is found at 80 to 171; that stretch reads LEELYGLALR…LNKCCPLLSA (92 aa). A coiled-coil region spans residues 169–254; sequence LSAYVASHRI…AALNSQTAVQ (86 aa). A disordered region spans residues 180-226; sequence KEEEEKRRKAEEERRQREEEERERLQKEEEKRKREKEDRLRREEEER. A q domain; Interaction with PI4KB, TBC1D22A and TBC1D22B region spans residues 238–305; that stretch reads QQKQQIMAAL…QQQAALQKQQ (68 aa). The span at 319–336 shows a compositional bias: polar residues; that stretch reads KVNTAGASDTLSVNGQAK. Positions 319-346 are disordered; it reads KVNTAGASDTLSVNGQAKTHTENSEKVL. The segment covering 337-346 has biased composition (basic and acidic residues); the sequence is THTENSEKVL. The GOLD domain occupies 381–523; that stretch reads KEKIRQDADS…SKSVYYRVYY (143 aa). A coiled-coil region spans residues 448 to 470; it reads SDEEEEEEENVTCEEKAKKNANK.

As to quaternary structure, homodimer. Interacts with the C-terminal cytoplasmic domain of giantin/GOLGB1. Interacts with PBR and PKA regulatory subunit RI-alpha. Does not interact with PKA regulatory subunit RI-beta nor PKA regulatory subunit RII-alpha. Interacts (via Q domain) with PI4KB (via N-terminus). Interacts (via Q domain) with TBC1D22A and TBC1D22B; interactions with PI4KB and with TBC1D22A and TBC1D22B are mutually exclusive. Interacts with C10ORF76 and RAB11B. In terms of tissue distribution, expressed in brain (hippocampus, olfactory bulb, neuronal and glial cells of the cortex), eye, submaxillary gland, testis (interstitial and tubular compartments), ovary (granulosa cells, theca cells at late stages and primary follicles), adrenal gland (fasciculata and glomerulosa cells), heart, liver, and steroidogenic cell lines.

It is found in the golgi apparatus membrane. The protein localises to the mitochondrion. Functionally, involved in the maintenance of Golgi structure by interacting with giantin, affecting protein transport between the endoplasmic reticulum and Golgi. Involved in hormone-induced steroid biosynthesis in testicular Leydig cells. Recruits PI4KB to the Golgi apparatus membrane; enhances the enzyme activity of PI4KB activity via its membrane recruitment thereby increasing the local concentration of the substrate in the vicinity of the kinase. This Mus musculus (Mouse) protein is Golgi resident protein GCP60 (Acbd3).